Reading from the N-terminus, the 313-residue chain is Porphobilinogen deaminase (313 aa).

At Cys-242 the chain carries S-(dipyrrolylmethanemethyl)cysteine.

This sequence belongs to the HMBS family. Monomer. Requires dipyrromethane as cofactor.

The enzyme catalyses 4 porphobilinogen + H2O = hydroxymethylbilane + 4 NH4(+). The protein operates within porphyrin-containing compound metabolism; protoporphyrin-IX biosynthesis; coproporphyrinogen-III from 5-aminolevulinate: step 2/4. Its function is as follows. Tetrapolymerization of the monopyrrole PBG into the hydroxymethylbilane pre-uroporphyrinogen in several discrete steps. This is Porphobilinogen deaminase from Yersinia pestis bv. Antiqua (strain Angola).